Reading from the N-terminus, the 164-residue chain is Bacterial ferritin (164 aa).

One can recognise a Ferritin-like diiron domain in the interval 1-147 (MKGKKSVISR…QQLGLIARMG (147 aa)). Fe cation contacts are provided by E18, E51, H54, E94, E129, and H132.

This sequence belongs to the bacterioferritin family. Heterooligomer of 24 subunits, arranged as 12 dimers, that are packed together to form an approximately spherical molecule with a central cavity, in which large amounts of iron can be deposited.

It carries out the reaction 4 Fe(2+) + O2 + 4 H(+) = 4 Fe(3+) + 2 H2O. It catalyses the reaction Fe(2+)(in) = Fe(2+)(out). In terms of biological role, iron-storage protein, whose ferroxidase center binds Fe(2+), oxidizes it using dioxygen to Fe(3+), and participates in the subsequent Fe(3+) oxide mineral core formation within the central cavity of the BFR protein shell. The polypeptide is Bacterial ferritin (Paramagnetospirillum magnetotacticum (Aquaspirillum magnetotacticum)).